The chain runs to 202 residues: MAMATRAIRYQLPSPRFRAPRCESSEPIKQIQIQQRPRGGDLAENGKIVLQPRLCTLRSYGSDMVIAKKDGGDGGGGGSDVELASPFFETLTDYIESSKKSQDFETISGRLAMIVFAVTVTEEIVTGNSLFKKLDVEGLSEAIGAGLAAMGCAAMFAWLTISRNRVGRIFTVSCNSFIDSLVDQIVDGLFYDTKPSDWSDDL.

A chloroplast-targeting transit peptide spans 1-60 (MAMATRAIRYQLPSPRFRAPRCESSEPIKQIQIQQRPRGGDLAENGKIVLQPRLCTLRSY). Helical transmembrane passes span 111 to 131 (LAMIVFAVTVTEEIVTGNSLF) and 142 to 162 (AIGAGLAAMGCAAMFAWLTIS).

The protein belongs to the ELIP/psbS family.

Its subcellular location is the plastid. It is found in the chloroplast thylakoid membrane. Functionally, may be involved in non-photochemical quenching, a process that maintains the balance between dissipation and utilization of light energy to minimize generation of oxidizing molecules, thereby protecting the plant against photo-oxidative damage. May play a photoprotective role in the thylakoid membrane in response to light stress. This is Stress enhanced protein 2, chloroplastic from Arabidopsis thaliana (Mouse-ear cress).